The primary structure comprises 218 residues: Recombination protein RecR (218 aa).

The C4-type zinc-finger motif lies at 56–71 (CRICCNISRDEVCRIC). One can recognise a Toprim domain in the interval 79–195 (GLICVVEEPK…VVSRLASGMP (117 aa)).

It belongs to the RecR family.

In terms of biological role, may play a role in DNA repair. It seems to be involved in an RecBC-independent recombinational process of DNA repair. It may act with RecF and RecO. This chain is Recombination protein RecR, found in Corynebacterium efficiens (strain DSM 44549 / YS-314 / AJ 12310 / JCM 11189 / NBRC 100395).